A 33-amino-acid chain; its full sequence is Kappa-sparatoxin-Hv1a (33 aa).

Disulfide bonds link C2-C17, C9-C22, and C16-C27. Tryptophan amide is present on W33.

Expressed by the venom gland.

Its subcellular location is the secreted. Its function is as follows. Blocks transient outward voltage-gated potassium channels in rat ventricular myocytes (thus prolonging action-potential duration) and rat Kv4.2/KCNA4 channels expressed in Xenopus oocytes. Is also a weak blocker of calcium channels in rat cerebellar granule cells. The chain is Kappa-sparatoxin-Hv1a from Heteropoda venatoria (Brown huntsman spider).